A 91-amino-acid chain; its full sequence is Acylphosphatase (91 aa).

The 87-residue stretch at 5-91 (CSKFIVSGHV…EHDYQGFEIL (87 aa)) folds into the Acylphosphatase-like domain. Catalysis depends on residues arginine 20 and asparagine 38.

This sequence belongs to the acylphosphatase family.

The enzyme catalyses an acyl phosphate + H2O = a carboxylate + phosphate + H(+). This is Acylphosphatase (acyP) from Vibrio cholerae serotype O1 (strain ATCC 39315 / El Tor Inaba N16961).